Here is a 301-residue protein sequence, read N- to C-terminus: MYNVKKSIKLGIAPIGWRNDDIPEIGKENTYKQILSDAALTGFSGTEVGGCYPQDPAELNKELMLRGLEIPGQWFSSFIIRDGIASAMNAFEQHCAYLQAIHAYVAVVSEQTYSIQGIIDKCVYTEKPNFSDSEWQLLCEGLNALGKIANAHGLKLAFHHHMGTGVQTLPEVDRLMENTDPQFVHLLFDTGHIYVSDGDVMPLLSKHFDRIKHVHFKDVRNEKLKACRLAKKSFLNSFLDGVFTVPGDGNIDFKSVLAYLVGHQYSGWIVVEAEQDPKKYNPLEYAQKGKKHIDELLKNYL.

Belongs to the IolE/MocC family. Glutathione serves as cofactor. It depends on Co(2+) as a cofactor. Requires Mn(2+) as cofactor.

The enzyme catalyses scyllo-inosose = 3D-3,5/4-trihydroxycyclohexane-1,2-dione + H2O. In terms of biological role, catalyzes the dehydration of inosose (2-keto-myo-inositol, 2KMI or 2,4,6/3,5-pentahydroxycyclohexanone) to 3D-(3,5/4)-trihydroxycyclohexane-1,2-dione (D-2,3-diketo-4-deoxy-epi-inositol). This Salmonella typhimurium (strain LT2 / SGSC1412 / ATCC 700720) protein is Inosose dehydratase.